An 855-amino-acid polypeptide reads, in one-letter code: Envelope glycoprotein gp160 (855 aa).

A signal peptide spans 1 to 31; it reads MRAREIERNCPNLWKWGIMLLGILMICSAAD. At 32–683 the chain is on the extracellular side; it reads NLWVTVYYGV…ITQWLWYIKI (652 aa). A disulfide bond links Cys53 and Cys73. N-linked (GlcNAc...) asparagine; by host glycosylation is found at Asn87, Asn129, Asn140, Asn145, Asn154, Asn158, Asn186, Asn189, Asn199, Asn236, Asn243, Asn264, Asn278, Asn291, and Asn297. 5 disulfide bridges follow: Cys118/Cys207, Cys125/Cys198, Cys130/Cys155, Cys220/Cys249, and Cys230/Cys241. Positions 130–154 are V1; the sequence is CTDESDEWMGNVTGKNVTEDIRMKN. The V2 stretch occupies residues 155-198; the sequence is CSFNITTVVRDKTKQVHALFYRLDIVPIDNDNSTNSTNYRLINC. The segment at 298-331 is V3; that stretch reads CTRPYKNTRQSTPIGLGQALYTTRGRTKIIGQAH. Cys298 and Cys332 form a disulfide bridge. Residues Asn333, Asn340, and Asn355 are each glycosylated (N-linked (GlcNAc...) asparagine; by host). The CD4-binding loop stretch occupies residues 364–374; it reads SSGGDAEITTH. Intrachain disulfides connect Cys378–Cys444 and Cys385–Cys417. Residues 385–417 are V4; the sequence is CNTSGLFNSTWNINNSEGANSTESDNKLITLQC. N-linked (GlcNAc...) asparagine; by host glycans are attached at residues Asn386, Asn392, Asn398, Asn404, Asn443, Asn447, Asn460, Asn461, and Asn464. V5 stretches follow at residues 459–470 and 462–470; these read TNNSSNETFRPG and SSNETFRPG. Residues 511–531 are fusion peptide; that stretch reads AIGLGAMFLGFLGAAGSTMGA. An immunosuppression region spans residues 573–591; the sequence is KQLQARILAVERYLKDQQL. An intrachain disulfide couples Cys597 to Cys603. Residues Asn610, Asn615, Asn624, Asn636, and Asn673 are each glycosylated (N-linked (GlcNAc...) asparagine; by host). A coiled-coil region spans residues 632 to 666; it reads REIDNYTGLIYRLIEESQTQQEKNEQELLELDKWA. The tract at residues 661–682 is MPER; binding to GalCer; it reads ELDKWASLWNWFNITQWLWYIK. Residues 684–704 form a helical membrane-spanning segment; it reads FIMIVGGLIGLRIVFAVLSLV. Topologically, residues 705–855 are cytoplasmic; the sequence is NRVRQGYSPL…IRQGLERLLL (151 aa). The YXXL motif; contains endocytosis signal motif lies at 711–714; sequence YSPL. Residue Cys763 is the site of S-palmitoyl cysteine; by host attachment. The short motif at 854–855 is the Di-leucine internalization motif element; that stretch reads LL.

The protein belongs to the HIV-1 env protein family. In terms of assembly, the mature envelope protein (Env) consists of a homotrimer of non-covalently associated gp120-gp41 heterodimers. The resulting complex protrudes from the virus surface as a spike. There seems to be as few as 10 spikes on the average virion. Interacts with host CD4, CCR5 and CXCR4. Gp120 also interacts with the C-type lectins CD209/DC-SIGN and CLEC4M/DC-SIGNR (collectively referred to as DC-SIGN(R)). Gp120 and gp41 interact with GalCer. Gp120 interacts with host ITGA4/ITGB7 complex; on CD4+ T-cells, this interaction results in rapid activation of integrin ITGAL/LFA-1, which facilitates efficient cell-to-cell spreading of HIV-1. Gp120 interacts with cell-associated heparan sulfate; this interaction increases virus infectivity on permissive cells and may be involved in infection of CD4- cells. The mature envelope protein (Env) consists of a homotrimer of non-covalently associated gp120-gp41 heterodimers. The resulting complex protrudes from the virus surface as a spike. There seems to be as few as 10 spikes on the average virion. Highly glycosylated by host. The high number of glycan on the protein is reffered to as 'glycan shield' because it contributes to hide protein sequence from adaptive immune system. Post-translationally, palmitoylation of the transmembrane protein and of Env polyprotein (prior to its proteolytic cleavage) is essential for their association with host cell membrane lipid rafts. Palmitoylation is therefore required for envelope trafficking to classical lipid rafts, but not for viral replication. In terms of processing, specific enzymatic cleavages in vivo yield mature proteins. Envelope glycoproteins are synthesized as an inactive precursor that is heavily N-glycosylated and processed likely by host cell furin in the Golgi to yield the mature SU and TM proteins. The cleavage site between SU and TM requires the minimal sequence [KR]-X-[KR]-R. About 2 of the 9 disulfide bonds of gp41 are reduced by P4HB/PDI, following binding to CD4 receptor.

It is found in the virion membrane. It localises to the host cell membrane. The protein resides in the host endosome membrane. Its function is as follows. Oligomerizes in the host endoplasmic reticulum into predominantly trimers. In a second time, gp160 transits in the host Golgi, where glycosylation is completed. The precursor is then proteolytically cleaved in the trans-Golgi and thereby activated by cellular furin or furin-like proteases to produce gp120 and gp41. Attaches the virus to the host lymphoid cell by binding to the primary receptor CD4. This interaction induces a structural rearrangement creating a high affinity binding site for a chemokine coreceptor like CXCR4 and/or CCR5. Acts as a ligand for CD209/DC-SIGN and CLEC4M/DC-SIGNR, which are respectively found on dendritic cells (DCs), and on endothelial cells of liver sinusoids and lymph node sinuses. These interactions allow capture of viral particles at mucosal surfaces by these cells and subsequent transmission to permissive cells. HIV subverts the migration properties of dendritic cells to gain access to CD4+ T-cells in lymph nodes. Virus transmission to permissive T-cells occurs either in trans (without DCs infection, through viral capture and transmission), or in cis (following DCs productive infection, through the usual CD4-gp120 interaction), thereby inducing a robust infection. In trans infection, bound virions remain infectious over days and it is proposed that they are not degraded, but protected in non-lysosomal acidic organelles within the DCs close to the cell membrane thus contributing to the viral infectious potential during DCs' migration from the periphery to the lymphoid tissues. On arrival at lymphoid tissues, intact virions recycle back to DCs' cell surface allowing virus transmission to CD4+ T-cells. Functionally, acts as a class I viral fusion protein. Under the current model, the protein has at least 3 conformational states: pre-fusion native state, pre-hairpin intermediate state, and post-fusion hairpin state. During fusion of viral and target intracellular membranes, the coiled coil regions (heptad repeats) assume a trimer-of-hairpins structure, positioning the fusion peptide in close proximity to the C-terminal region of the ectodomain. The formation of this structure appears to drive apposition and subsequent fusion of viral and target cell membranes. Complete fusion occurs in host cell endosomes and is dynamin-dependent, however some lipid transfer might occur at the plasma membrane. The virus undergoes clathrin-dependent internalization long before endosomal fusion, thus minimizing the surface exposure of conserved viral epitopes during fusion and reducing the efficacy of inhibitors targeting these epitopes. Membranes fusion leads to delivery of the nucleocapsid into the cytoplasm. In Homo sapiens (Human), this protein is Envelope glycoprotein gp160.